Reading from the N-terminus, the 648-residue chain is Activatory protein CHA4 (648 aa).

Pro residues predominate over residues 1-10 (MMLEPSPPPL). The tract at residues 1–37 (MMLEPSPPPLTTTVTPSLPSSLKKSVTDNDQNNNNVP) is disordered. Residues 11 to 22 (TTTVTPSLPSSL) are compositionally biased toward low complexity. The segment at residues 44-70 (CQNCRRRRRKCNMEKPCSNCIKFRTEC) is a DNA-binding region (zn(2)-C6 fungal-type). The tract at residues 140 to 177 (AQSALPSSESNDENESDAFTKKMPSESPPPVGTNSIYP) is disordered. 2 positions are modified to phosphoserine: Ser164 and Ser166.

It localises to the nucleus. Functionally, activates the CHA1 gene for L-serine dehydratase. Binds to the DNA sequence 5'-GVGGARAYRTRATTCCRC-3'. This is Activatory protein CHA4 (CHA4) from Saccharomyces cerevisiae (strain ATCC 204508 / S288c) (Baker's yeast).